A 209-amino-acid chain; its full sequence is MAFDQDWVPKTRLGKLVVEGQVASMDEAIKSGLPIREPQIIDMLLPDLEDEVLDINMVQRMTDSGRRVKFRATVIVGNRNGYVGLGQAKDVQVGPAIRKAIDAAKLNITYIRRGCGSWECACGLPHTVPYEVTGKAGSVSVTLIPAPRGLGIAAGNTATKVLEKAGIKDVWTKTFGTTRSTLNFAKATYDALNQVNVVRLPVYYGKEEV.

One can recognise an S5 DRBM domain in the interval 48–111 (LEDEVLDINM…DAAKLNITYI (64 aa)).

Belongs to the universal ribosomal protein uS5 family. As to quaternary structure, part of the 30S ribosomal subunit. Contacts protein S4.

Its function is as follows. With S4 and S12 plays an important role in translational accuracy. This Methanosarcina acetivorans (strain ATCC 35395 / DSM 2834 / JCM 12185 / C2A) protein is Small ribosomal subunit protein uS5.